Reading from the N-terminus, the 93-residue chain is Putative pterin-4-alpha-carbinolamine dehydratase (93 aa).

It belongs to the pterin-4-alpha-carbinolamine dehydratase family.

The enzyme catalyses (4aS,6R)-4a-hydroxy-L-erythro-5,6,7,8-tetrahydrobiopterin = (6R)-L-erythro-6,7-dihydrobiopterin + H2O. This is Putative pterin-4-alpha-carbinolamine dehydratase from Synechococcus sp. (strain WH7803).